The chain runs to 212 residues: MNKIAIQKPNIPENLQTADFHDAVTQDDVISMHLFEDCTICGEDIERLCVEKTVFRNVVFIDVSFRHIELTDVIFEKCDLSNADFSGAVIHRTSVKQSKMVGMNVAEATLRNVSFEECHGHFSSFSYSNMKQVRFDHCALMQSECSDTVLQQTHFDGCELEGASFTGTSLQNMDISTCRFEQLHVSLDKLKGCKIAPEHAIAFARALGAVIV.

Pentapeptide repeat domains follow at residues 63–102, 103–142, and 143–182; these read VSFR…KMVG, MNVA…ALMQ, and SECS…RFEQ.

This is an uncharacterized protein from Bacillus subtilis (strain 168).